The primary structure comprises 172 residues: Translation initiation factor IF-3 (172 aa).

Belongs to the IF-3 family. As to quaternary structure, monomer.

The protein localises to the cytoplasm. IF-3 binds to the 30S ribosomal subunit and shifts the equilibrium between 70S ribosomes and their 50S and 30S subunits in favor of the free subunits, thus enhancing the availability of 30S subunits on which protein synthesis initiation begins. The chain is Translation initiation factor IF-3 from Campylobacter jejuni subsp. jejuni serotype O:6 (strain 81116 / NCTC 11828).